The primary structure comprises 406 residues: MTFSVDKVRADFPVLSREVNGLPLAYLDSAASAQKPSQVIDAEAEFYRHGYAAVHRGIHTLSAQATEKMENVRKRASLFINARSAEELVFVRGTTEGINLVANSWGNSNVRAGDNIIISQMEHHANIVPWQMLCARVGAELRVIPLNPDGTLQLETLPTLFDEKTRLLAITHVSNVLGTENPLAEMITLAHQHGAKVLVDGAQAVMHHPVDVQALDCDFYVFSGHKLYGPTGIGILYVKEALLQEMPPWEGGGSMIATVSLSEGTTWTKAPWRFEAGTPNTGGIIGLGAALEYVSALGLNSIAEYEQNLMHYALSQLESVPDLTLYGPQNRLGVIAFNLGKHHAYDVGSFLDNYGIAVRTGHHCAMPLMAYYNVPAMCRASLAMYNTHEEVDRLVTGLQRIHRLLG.

Lys226 carries the post-translational modification N6-(pyridoxal phosphate)lysine. Cys364 serves as the catalytic Cysteine persulfide intermediate.

This sequence belongs to the class-V pyridoxal-phosphate-dependent aminotransferase family. Csd subfamily. As to quaternary structure, homodimer. Interacts with SufE and the SufBCD complex composed of SufB, SufC and SufD. The interaction with SufE is required to mediate the direct transfer of the sulfur atom from the S-sulfanylcysteine. Requires pyridoxal 5'-phosphate as cofactor.

It is found in the cytoplasm. It carries out the reaction (sulfur carrier)-H + L-cysteine = (sulfur carrier)-SH + L-alanine. It catalyses the reaction L-selenocysteine + AH2 = hydrogenselenide + L-alanine + A + H(+). Its pathway is cofactor biosynthesis; iron-sulfur cluster biosynthesis. Functionally, cysteine desulfurases mobilize the sulfur from L-cysteine to yield L-alanine, an essential step in sulfur metabolism for biosynthesis of a variety of sulfur-containing biomolecules. Component of the suf operon, which is activated and required under specific conditions such as oxidative stress and iron limitation. Acts as a potent selenocysteine lyase in vitro, that mobilizes selenium from L-selenocysteine. Selenocysteine lyase activity is however unsure in vivo. The polypeptide is Cysteine desulfurase (Escherichia coli (strain SE11)).